The sequence spans 561 residues: Formate--tetrahydrofolate ligase (561 aa).

ATP is bound at residue 70-77 (TPAGEGKT).

Belongs to the formate--tetrahydrofolate ligase family.

It catalyses the reaction (6S)-5,6,7,8-tetrahydrofolate + formate + ATP = (6R)-10-formyltetrahydrofolate + ADP + phosphate. It functions in the pathway one-carbon metabolism; tetrahydrofolate interconversion. This Pelagibacter ubique (strain HTCC1062) protein is Formate--tetrahydrofolate ligase.